Consider the following 475-residue polypeptide: Beta-amyrin 16-alpha-hydroxylase CYP87D16 (475 aa).

Residues 3 to 23 (VVGLIGVAVVTILITQYVYKW) traverse the membrane as a helical segment. Residue Cys-423 participates in heme binding.

Belongs to the cytochrome P450 family. The cofactor is heme.

The protein resides in the membrane. It catalyses the reaction beta-amyrin + reduced [NADPH--hemoprotein reductase] + O2 = 16alpha-hydroxy-beta-amyrin + oxidized [NADPH--hemoprotein reductase] + H2O + H(+). Functionally, involved in the biosynthetic pathway of maesasaponins, which are oleanane-type saponins with diverse biological activities. Catalyzes the C-16alpha oxidation of beta-amyrin to form 16alpha-hydroxy-beta-amyrin. In Maesa lanceolata (False assegai), this protein is Beta-amyrin 16-alpha-hydroxylase CYP87D16.